The sequence spans 386 residues: All-trans-retinol dehydrogenase [NAD(+)] ADH7 (386 aa).

Cys-59 is a Zn(2+) binding site. Residue 60 to 64 coordinates NAD(+); sequence RTDDH. Zn(2+) contacts are provided by His-80, Cys-110, Cys-113, Cys-116, Cys-124, and Cys-186. NAD(+) contacts are provided by residues 211–216, Asp-235, Lys-240, 281–283, 304–306, 329–331, and Arg-381; these read GLGGVG, IGH, VGV, and CVF.

The protein belongs to the zinc-containing alcohol dehydrogenase family. Class-IV subfamily. As to quaternary structure, homodimer. Zn(2+) serves as cofactor. As to expression, preferentially expressed in stomach.

It is found in the cytoplasm. The catalysed reaction is a primary alcohol + NAD(+) = an aldehyde + NADH + H(+). The enzyme catalyses 10-hydroxydecanoate + NAD(+) = 10-oxodecanoate + NADH + H(+). It catalyses the reaction all-trans-retinol + NAD(+) = all-trans-retinal + NADH + H(+). It carries out the reaction 9-cis-retinol + NAD(+) = 9-cis-retinal + NADH + H(+). The catalysed reaction is all-trans-3,4-didehydroretinol + NAD(+) = all-trans-3,4-didehydroretinal + NADH + H(+). The enzyme catalyses all-trans-4-hydroxyretinol + NAD(+) = all-trans-4-hydroxyretinal + NADH + H(+). It catalyses the reaction all-trans-4-oxoretinol + NAD(+) = all-trans-4-oxoretinal + NADH + H(+). It carries out the reaction 12-hydroxydodecanoate + NAD(+) = 12-oxododecanoate + NADH + H(+). The catalysed reaction is 16-hydroxyhexadecanoate + NAD(+) = 16-oxohexadecanoate + NADH + H(+). The enzyme catalyses hexan-1-ol + NAD(+) = hexanal + NADH + H(+). It catalyses the reaction (E)-hex-2-en-1-ol + NAD(+) = (E)-hex-2-enal + NADH + H(+). It carries out the reaction (E)-4-hydroxynon-2-en-1-ol + NAD(+) = (E)-4-hydroxynon-2-enal + NADH + H(+). With respect to regulation, retinol oxidation is inhibited by the detergent Tween 80. Ethanol inhibits both all-trans-retinol and 9-cis-retinol oxidation. 13-cis-retinol is an effective competitive inhibitor of the 9-cis-retinol oxidation. All-trans-retinoic acid is a powerful inhibitor of all-trans-retinol oxidation. 13-cis-retinoic acid is a powerful inhibitor of all-trans-retinol oxidation. Cimetidine competitively inhibited ethanol oxidation. Its function is as follows. Catalyzes the NAD-dependent oxidation of all-trans-retinol, alcohol, and omega-hydroxy fatty acids and their derivatives. Oxidizes preferentially all trans-retinol, all-trans-4-hydroxyretinol, 9-cis-retinol, 2-hexenol, and long chain omega-hydroxy fatty acids such as juniperic acid. In vitro can also catalyze the NADH-dependent reduction of all-trans-retinal and aldehydes and their derivatives. Reduces preferentially all trans-retinal, all-trans-4-oxoretinal and hexanal. Catalyzes in the oxidative direction with higher efficiency. Therefore may participate in retinoid metabolism, fatty acid omega-oxidation, and elimination of cytotoxic aldehydes produced by lipid peroxidation. The chain is All-trans-retinol dehydrogenase [NAD(+)] ADH7 from Homo sapiens (Human).